We begin with the raw amino-acid sequence, 400 residues long: CCA-adding enzyme (400 aa).

The ATP site is built by glycine 32 and arginine 35. Glycine 32 and arginine 35 together coordinate CTP. The Mg(2+) site is built by aspartate 45 and aspartate 47. Positions 116, 159, 162, 165, and 168 each coordinate ATP. Residues arginine 116, aspartate 159, arginine 162, arginine 165, and arginine 168 each contribute to the CTP site.

The protein belongs to the tRNA nucleotidyltransferase/poly(A) polymerase family. Bacterial CCA-adding enzyme type 3 subfamily. In terms of assembly, homodimer. It depends on Mg(2+) as a cofactor.

The catalysed reaction is a tRNA precursor + 2 CTP + ATP = a tRNA with a 3' CCA end + 3 diphosphate. It catalyses the reaction a tRNA with a 3' CCA end + 2 CTP + ATP = a tRNA with a 3' CCACCA end + 3 diphosphate. Catalyzes the addition and repair of the essential 3'-terminal CCA sequence in tRNAs without using a nucleic acid template. Adds these three nucleotides in the order of C, C, and A to the tRNA nucleotide-73, using CTP and ATP as substrates and producing inorganic pyrophosphate. tRNA 3'-terminal CCA addition is required both for tRNA processing and repair. Also involved in tRNA surveillance by mediating tandem CCA addition to generate a CCACCA at the 3' terminus of unstable tRNAs. While stable tRNAs receive only 3'-terminal CCA, unstable tRNAs are marked with CCACCA and rapidly degraded. The protein is CCA-adding enzyme of Limosilactobacillus fermentum (strain NBRC 3956 / LMG 18251) (Lactobacillus fermentum).